Consider the following 382-residue polypeptide: G2/mitotic-specific cyclin-B2 (382 aa).

Polar residues predominate over residues 1–12; that stretch reads MSSVEAVTQQQL. The interval 1–78 is disordered; sequence MSSVEAVTQQ…HTSAGDPAPI (78 aa). The span at 38 to 47 shows a compositional bias: low complexity; the sequence is NRNAAAAANR.

It belongs to the cyclin family. Cyclin AB subfamily. Interacts with the CDK1 protein kinase to form a serine/threonine kinase holoenzyme complex also known as maturation promoting factor (MPF). The cyclin subunit imparts substrate specificity to the complex.

Its function is as follows. Essential for the control of the cell cycle at the G2/M (mitosis) transition. The polypeptide is G2/mitotic-specific cyclin-B2 (ccnb2) (Oryzias javanicus (Javanese ricefish)).